An 878-amino-acid polypeptide reads, in one-letter code: MutS protein homolog 4 (878 aa).

Positions 22–41 (NSSNSISKPSTKKSIRNQKS) are disordered. Residue 634-641 (GCNMSGKS) participates in ATP binding.

This sequence belongs to the DNA mismatch repair MutS family. In terms of assembly, heterooligomer of MSH4 and MSH5.

Functionally, involved in meiotic recombination. Facilitate crossovers between homologs during meiosis. This is MutS protein homolog 4 (MSH4) from Saccharomyces cerevisiae (strain ATCC 204508 / S288c) (Baker's yeast).